Reading from the N-terminus, the 363-residue chain is Peptide chain release factor 2 (363 aa).

Position 251 is an N5-methylglutamine (Q251).

This sequence belongs to the prokaryotic/mitochondrial release factor family. Methylated by PrmC. Methylation increases the termination efficiency of RF2.

Its subcellular location is the cytoplasm. Peptide chain release factor 2 directs the termination of translation in response to the peptide chain termination codons UGA and UAA. The protein is Peptide chain release factor 2 of Helicobacter pylori (strain G27).